Here is a 300-residue protein sequence, read N- to C-terminus: Integrin-binding sialoprotein (300 aa).

A disordered region spans residues 41–258 (RFPVQSSSDS…YEQTGAHEYD (218 aa)). Residues S46, S51, S59, S60, S82, and S90 each carry the phosphoserine modification. Over residues 46 to 58 (SSSDSSEENGNGD) the composition is skewed to low complexity. Over residues 59–92 (SSEEEEEEEENSNEEENNEENEDSDGNEDEDSEA) the composition is skewed to acidic residues. Residues 93-102 (ENITLSTTTL) show a composition bias toward polar residues. An N-linked (GlcNAc...) asparagine glycan is attached at N94. Over residues 125–136 (KAGDIGKKSAKE) the composition is skewed to basic and acidic residues. Residues 137–160 (EESDEDEEEEEENEENEAEVDDNE) show a composition bias toward acidic residues. S139 is subject to Phosphoserine. Composition is skewed to polar residues over residues 161–173 (QGTNGTSTNSTEV), 193–202 (VTEAQGTTVA), and 229–243 (ISGTTLPPSGKTTTP). 2 N-linked (GlcNAc...) asparagine glycosylation sites follow: N164 and N169. Residue S266 is modified to Phosphoserine. The Integrin-binding motif motif lies at 272–274 (RGD). S293 bears the Phosphoserine mark. Sulfotyrosine is present on residues Y299 and Y300.

As to quaternary structure, monomer. Interacts with integrins; the interaction promotes cell adhesion.

It is found in the secreted. Functionally, binds tightly to hydroxyapatite. Appears to form an integral part of the mineralized matrix. Probably important to cell-matrix interaction. Promotes adhesion and migration of various cells via the alpha-V/beta-3 integrin receptor (ITGAV:ITGB3). This Sus scrofa (Pig) protein is Integrin-binding sialoprotein (IBSP).